We begin with the raw amino-acid sequence, 254 residues long: 4-hydroxy-tetrahydrodipicolinate reductase (254 aa).

Residue 7–12 coordinates NAD(+); it reads GASGRI. Arginine 35 contributes to the NADP(+) binding site. NAD(+)-binding positions include 91–93 and 115–118; these read GTT and AHNM. The active-site Proton donor/acceptor is histidine 147. Histidine 148 is a binding site for (S)-2,3,4,5-tetrahydrodipicolinate. Lysine 151 (proton donor) is an active-site residue. (S)-2,3,4,5-tetrahydrodipicolinate is bound at residue 157-158; the sequence is GT.

It belongs to the DapB family.

The protein resides in the cytoplasm. It catalyses the reaction (S)-2,3,4,5-tetrahydrodipicolinate + NAD(+) + H2O = (2S,4S)-4-hydroxy-2,3,4,5-tetrahydrodipicolinate + NADH + H(+). The enzyme catalyses (S)-2,3,4,5-tetrahydrodipicolinate + NADP(+) + H2O = (2S,4S)-4-hydroxy-2,3,4,5-tetrahydrodipicolinate + NADPH + H(+). The protein operates within amino-acid biosynthesis; L-lysine biosynthesis via DAP pathway; (S)-tetrahydrodipicolinate from L-aspartate: step 4/4. Functionally, catalyzes the conversion of 4-hydroxy-tetrahydrodipicolinate (HTPA) to tetrahydrodipicolinate. In Helicobacter acinonychis (strain Sheeba), this protein is 4-hydroxy-tetrahydrodipicolinate reductase.